Consider the following 63-residue polypeptide: 2-hydroxymuconate tautomerase (63 aa).

Catalysis depends on proline 2, which acts as the Proton acceptor; via imino nitrogen.

Belongs to the 4-oxalocrotonate tautomerase family. As to quaternary structure, homohexamer.

It carries out the reaction (2Z,4E)-2-hydroxyhexa-2,4-dienedioate = (3E)-2-oxohex-3-enedioate. It participates in xenobiotic degradation; toluene degradation. Its pathway is xenobiotic degradation; xylene degradation. Its function is as follows. Catalyzes the ketonization of 2-hydroxymuconate stereoselectively to yield 2-oxo-3-hexenedioate. The sequence is that of 2-hydroxymuconate tautomerase (xylH) from Pseudomonas putida (Arthrobacter siderocapsulatus).